Reading from the N-terminus, the 43-residue chain is Mu-conotoxin-like CalTx 12.2.1E (43 aa).

Residue Arg1 is a propeptide. 4 disulfides stabilise this stretch: Cys4–Cys16, Cys11–Cys24, Cys18–Cys29, and Cys23–Cys35. Trp31 carries the 6'-bromotryptophan modification. A 4-hydroxyproline modification is found at Pro36. A 6'-bromotryptophan modification is found at Trp40.

As to expression, expressed by the venom duct.

It is found in the secreted. Functionally, mu-conotoxins block voltage-gated sodium channels. This toxin reversibly blocks voltage-gated sodium channel in cephalopods, with no alteration in the voltage dependence of sodium conductance or on the kinetics of inactivation. The chain is Mu-conotoxin-like CalTx 12.2.1E from Californiconus californicus (California cone).